Consider the following 229-residue polypeptide: Large ribosomal subunit protein uL1 (229 aa).

The protein belongs to the universal ribosomal protein uL1 family. In terms of assembly, part of the 50S ribosomal subunit.

In terms of biological role, binds directly to 23S rRNA. The L1 stalk is quite mobile in the ribosome, and is involved in E site tRNA release. Protein L1 is also a translational repressor protein, it controls the translation of the L11 operon by binding to its mRNA. The sequence is that of Large ribosomal subunit protein uL1 from Streptococcus sanguinis (strain SK36).